Reading from the N-terminus, the 959-residue chain is Glycine dehydrogenase (decarboxylating) (959 aa).

Lys704 carries the N6-(pyridoxal phosphate)lysine modification.

This sequence belongs to the GcvP family. As to quaternary structure, the glycine cleavage system is composed of four proteins: P, T, L and H. Pyridoxal 5'-phosphate serves as cofactor.

The catalysed reaction is N(6)-[(R)-lipoyl]-L-lysyl-[glycine-cleavage complex H protein] + glycine + H(+) = N(6)-[(R)-S(8)-aminomethyldihydrolipoyl]-L-lysyl-[glycine-cleavage complex H protein] + CO2. Functionally, the glycine cleavage system catalyzes the degradation of glycine. The P protein binds the alpha-amino group of glycine through its pyridoxal phosphate cofactor; CO(2) is released and the remaining methylamine moiety is then transferred to the lipoamide cofactor of the H protein. The sequence is that of Glycine dehydrogenase (decarboxylating) from Parasynechococcus marenigrum (strain WH8102).